The primary structure comprises 432 residues: Acyl-coenzyme A thioesterase 3 (432 aa).

Active-site charge relay system residues include serine 243, aspartate 337, and histidine 371. The Microbody targeting signal signature appears at 430–432 (AKL).

It belongs to the C/M/P thioester hydrolase family. As to expression, widely expressed. Highly expressed in the kidney, expressed at low level in the liver. Isoform 2 is expressed in the kidney, but not in the liver. Isoform 1 is liver-specific. Highly expressed in kidney (at protein level).

It localises to the peroxisome. It catalyses the reaction hexadecanoyl-CoA + H2O = hexadecanoate + CoA + H(+). It carries out the reaction decanoyl-CoA + H2O = decanoate + CoA + H(+). The catalysed reaction is dodecanoyl-CoA + H2O = dodecanoate + CoA + H(+). The enzyme catalyses tetradecanoyl-CoA + H2O = tetradecanoate + CoA + H(+). It catalyses the reaction octadecanoyl-CoA + H2O = octadecanoate + CoA + H(+). It carries out the reaction eicosanoyl-CoA + H2O = eicosanoate + CoA + H(+). The catalysed reaction is (9Z)-octadecenoyl-CoA + H2O = (9Z)-octadecenoate + CoA + H(+). The enzyme catalyses (9Z,12Z)-octadecadienoyl-CoA + H2O = (9Z,12Z)-octadecadienoate + CoA + H(+). It catalyses the reaction (5Z,8Z,11Z,14Z)-eicosatetraenoyl-CoA + H2O = (5Z,8Z,11Z,14Z)-eicosatetraenoate + CoA + H(+). It carries out the reaction tetracosanoyl-CoA + H2O = tetracosanoate + CoA + H(+). The catalysed reaction is hexacosanoyl-CoA + H2O = hexacosanoate + CoA + H(+). The enzyme catalyses docosanoyl-CoA + H2O = docosanoate + CoA + H(+). It catalyses the reaction (9Z)-hexadecenoyl-CoA + H2O = (9Z)-hexadecenoate + CoA + H(+). The protein operates within lipid metabolism; fatty acid metabolism. Catalyzes the hydrolysis of acyl-CoAs into free fatty acids and coenzyme A (CoASH), regulating their respective intracellular levels. Mainly active on long-chain acyl-CoAs. May have a function in termination of beta-oxidation of fatty acids. The sequence is that of Acyl-coenzyme A thioesterase 3 (Acot3) from Mus musculus (Mouse).